Reading from the N-terminus, the 498-residue chain is ATP synthase subunit beta, chloroplastic (498 aa).

An ATP-binding site is contributed by 172–179; that stretch reads GGAGVGKT.

It belongs to the ATPase alpha/beta chains family. F-type ATPases have 2 components, CF(1) - the catalytic core - and CF(0) - the membrane proton channel. CF(1) has five subunits: alpha(3), beta(3), gamma(1), delta(1), epsilon(1). CF(0) has four main subunits: a(1), b(1), b'(1) and c(9-12).

It localises to the plastid. It is found in the chloroplast thylakoid membrane. The catalysed reaction is ATP + H2O + 4 H(+)(in) = ADP + phosphate + 5 H(+)(out). Functionally, produces ATP from ADP in the presence of a proton gradient across the membrane. The catalytic sites are hosted primarily by the beta subunits. The protein is ATP synthase subunit beta, chloroplastic of Nicotiana tomentosiformis (Tobacco).